The chain runs to 34 residues: Histone H1, sperm (34 aa).

Residues 1 to 34 (PASPQKRAASPRRSPKKSPRKSPKKSPRKRSASP) are disordered. Positions 9 to 34 (ASPRRSPKKSPRKSPKKSPRKRSASP) are enriched in basic residues.

The protein belongs to the histone H1/H5 family. In terms of tissue distribution, sperm.

It localises to the nucleus. The protein localises to the chromosome. In terms of biological role, histones H1 are necessary for the condensation of nucleosome chains into higher-order structures. The chain is Histone H1, sperm from Strongylocentrotus purpuratus (Purple sea urchin).